We begin with the raw amino-acid sequence, 309 residues long: 4-hydroxy-3-methylbut-2-enyl diphosphate reductase (309 aa).

A [4Fe-4S] cluster-binding site is contributed by Cys-12. Positions 43 and 77 each coordinate (2E)-4-hydroxy-3-methylbut-2-enyl diphosphate. The dimethylallyl diphosphate site is built by His-43 and His-77. 2 residues coordinate isopentenyl diphosphate: His-43 and His-77. Position 99 (Cys-99) interacts with [4Fe-4S] cluster. His-127 provides a ligand contact to (2E)-4-hydroxy-3-methylbut-2-enyl diphosphate. His-127 contributes to the dimethylallyl diphosphate binding site. Residue His-127 coordinates isopentenyl diphosphate. Glu-129 functions as the Proton donor in the catalytic mechanism. Thr-167 lines the (2E)-4-hydroxy-3-methylbut-2-enyl diphosphate pocket. Cys-197 serves as a coordination point for [4Fe-4S] cluster. (2E)-4-hydroxy-3-methylbut-2-enyl diphosphate-binding residues include Ser-225, Ser-226, Asn-227, and Ser-269. Residues Ser-225, Ser-226, Asn-227, and Ser-269 each coordinate dimethylallyl diphosphate. Positions 225, 226, 227, and 269 each coordinate isopentenyl diphosphate.

Belongs to the IspH family. [4Fe-4S] cluster serves as cofactor.

The catalysed reaction is isopentenyl diphosphate + 2 oxidized [2Fe-2S]-[ferredoxin] + H2O = (2E)-4-hydroxy-3-methylbut-2-enyl diphosphate + 2 reduced [2Fe-2S]-[ferredoxin] + 2 H(+). It catalyses the reaction dimethylallyl diphosphate + 2 oxidized [2Fe-2S]-[ferredoxin] + H2O = (2E)-4-hydroxy-3-methylbut-2-enyl diphosphate + 2 reduced [2Fe-2S]-[ferredoxin] + 2 H(+). Its pathway is isoprenoid biosynthesis; dimethylallyl diphosphate biosynthesis; dimethylallyl diphosphate from (2E)-4-hydroxy-3-methylbutenyl diphosphate: step 1/1. The protein operates within isoprenoid biosynthesis; isopentenyl diphosphate biosynthesis via DXP pathway; isopentenyl diphosphate from 1-deoxy-D-xylulose 5-phosphate: step 6/6. In terms of biological role, catalyzes the conversion of 1-hydroxy-2-methyl-2-(E)-butenyl 4-diphosphate (HMBPP) into a mixture of isopentenyl diphosphate (IPP) and dimethylallyl diphosphate (DMAPP). Acts in the terminal step of the DOXP/MEP pathway for isoprenoid precursor biosynthesis. In Wolbachia pipientis wMel, this protein is 4-hydroxy-3-methylbut-2-enyl diphosphate reductase.